A 696-amino-acid polypeptide reads, in one-letter code: MKAPIPHLILLYATFTQSLKVVTKRGSADGCTDWSIDIKKYQVLVGEPVRIKCALFYGYIRTNYSLAQSAGLSLMWYKSSGPGDFEEPIAFDGSRMSKEEDSIWFRPTLLQDSGLYACVIRNSTYCMKVSISLTVGENDTGLCYNSKMKYFEKAELSKSKEISCRDIEDFLLPTREPEILWYKECRTKTWRPSIVFKRDTLLIREVREDDIGNYTCELKYGGFVVRRTTELTVTAPLTDKPPKLLYPMESKLTIQETQLGDSANLTCRAFFGYSGDVSPLIYWMKGEKFIEDLDENRVWESDIRILKEHLGEQEVSISLIVDSVEEGDLGNYSCYVENGNGRRHASVLLHKRELMYTVELAGGLGAILLLLVCLVTIYKCYKIEIMLFYRNHFGAEELDGDNKDYDAYLSYTKVDPDQWNQETGEEERFALEILPDMLEKHYGYKLFIPDRDLIPTGTYIEDVARCVDQSKRLIIVMTPNYVVRRGWSIFELETRLRNMLVTGEIKVILIECSELRGIMNYQEVEALKHTIKLLTVIKWHGPKCNKLNSKFWKRLQYEMPFKRIEPITHEQALDVSEQGPFGELQTVSAISMAAATSTALATAHPDLRSTFHNTYHSQMRQKHYYRSYEYDVPPTGTLPLTSIGNQHTYCNIPMTLINGQRPQTKSSREQNPDEAHTNSAILPLLPRETSISSVIW.

The N-terminal stretch at 1–18 is a signal peptide; sequence MKAPIPHLILLYATFTQS. The 116-residue stretch at 19 to 134 folds into the Ig-like C2-type 1 domain; sequence LKVVTKRGSA…YCMKVSISLT (116 aa). Topologically, residues 19–357 are extracellular; sequence LKVVTKRGSA…LLHKRELMYT (339 aa). 2 disulfides stabilise this stretch: C31/C126 and C53/C118. Residues N63, N122, and N138 are each glycosylated (N-linked (GlcNAc...) asparagine). 2 disulfides stabilise this stretch: C143–C185 and C164–C216. 2 Ig-like C2-type domains span residues 143 to 232 and 242 to 350; these read CYNS…TELT and PKLL…VLLH. N-linked (GlcNAc...) asparagine glycosylation is found at N213, N264, and N331. C267 and C334 are oxidised to a cystine. Residues 358-378 traverse the membrane as a helical segment; it reads VELAGGLGAILLLLVCLVTIY. The Cytoplasmic portion of the chain corresponds to 379 to 696; sequence KCYKIEIMLF…RETSISSVIW (318 aa). Residues 403–559 enclose the TIR domain; sequence KDYDAYLSYT…KFWKRLQYEM (157 aa). The active site involves E491. The tract at residues 549–644 is interaction with NCS1; the sequence is SKFWKRLQYE…TGTLPLTSIG (96 aa). The interval 659–680 is disordered; the sequence is GQRPQTKSSREQNPDEAHTNSA. The span at 666-676 shows a compositional bias: basic and acidic residues; it reads SSREQNPDEAH.

It belongs to the interleukin-1 receptor family. In terms of assembly, homodimer. Interacts (calcium-independent) with NCS1. Interacts (via the first immunoglobilin domain) with PTPRD (via the second immunoglobilin domain); this interaction is PTPRD-splicing-dependent and induces pre- and post-synaptic differentiation of neurons and is required for IL1RAPL1-mediated synapse formation. Detected at low levels in heart, skeletal muscle, ovary, skin, amygdala, caudate nucleus, corpus callosum, hippocampus, substantia nigra and thalamus. Detected at very low levels in tonsil, prostate, testis, small intestine, placenta, colon and fetal liver.

It is found in the cell membrane. It localises to the cytoplasm. The protein resides in the cell projection. The protein localises to the axon. Its subcellular location is the dendrite. It carries out the reaction NAD(+) + H2O = ADP-D-ribose + nicotinamide + H(+). May regulate secretion and presynaptic differentiation through inhibition of the activity of N-type voltage-gated calcium channel. May activate the MAP kinase JNK. Plays a role in neurite outgrowth. During dendritic spine formation can bidirectionally induce pre- and post-synaptic differentiation of neurons by trans-synaptically binding to PTPRD. This is Interleukin-1 receptor accessory protein-like 1 (IL1RAPL1) from Homo sapiens (Human).